The sequence spans 395 residues: ATP phosphoribosyltransferase regulatory subunit (395 aa).

The protein belongs to the class-II aminoacyl-tRNA synthetase family. HisZ subfamily. As to quaternary structure, heteromultimer composed of HisG and HisZ subunits.

It is found in the cytoplasm. It participates in amino-acid biosynthesis; L-histidine biosynthesis; L-histidine from 5-phospho-alpha-D-ribose 1-diphosphate: step 1/9. Functionally, required for the first step of histidine biosynthesis. May allow the feedback regulation of ATP phosphoribosyltransferase activity by histidine. The chain is ATP phosphoribosyltransferase regulatory subunit from Azotobacter vinelandii (strain DJ / ATCC BAA-1303).